A 330-amino-acid chain; its full sequence is tRNA pseudouridine synthase B (330 aa).

The Nucleophile role is filled by Asp-42.

The protein belongs to the pseudouridine synthase TruB family. Type 1 subfamily.

The enzyme catalyses uridine(55) in tRNA = pseudouridine(55) in tRNA. In terms of biological role, responsible for synthesis of pseudouridine from uracil-55 in the psi GC loop of transfer RNAs. This Lactococcus lactis subsp. cremoris (strain SK11) protein is tRNA pseudouridine synthase B.